A 601-amino-acid chain; its full sequence is Elongation factor 4 (601 aa).

Residues 7 to 189 (DTIRNFSIVA…AIVAKLPPPK (183 aa)) enclose the tr-type G domain. Residues 19–24 (DHGKST) and 136–139 (NKID) contribute to the GTP site.

This sequence belongs to the TRAFAC class translation factor GTPase superfamily. Classic translation factor GTPase family. LepA subfamily.

Its subcellular location is the cell inner membrane. The catalysed reaction is GTP + H2O = GDP + phosphate + H(+). Functionally, required for accurate and efficient protein synthesis under certain stress conditions. May act as a fidelity factor of the translation reaction, by catalyzing a one-codon backward translocation of tRNAs on improperly translocated ribosomes. Back-translocation proceeds from a post-translocation (POST) complex to a pre-translocation (PRE) complex, thus giving elongation factor G a second chance to translocate the tRNAs correctly. Binds to ribosomes in a GTP-dependent manner. The sequence is that of Elongation factor 4 from Methylobacterium nodulans (strain LMG 21967 / CNCM I-2342 / ORS 2060).